Reading from the N-terminus, the 429-residue chain is Dihydroorotase (429 aa).

Histidine 59 and histidine 61 together coordinate Zn(2+). Substrate-binding positions include 61 to 63 (HLR) and asparagine 93. 4 residues coordinate Zn(2+): lysine 143, histidine 171, histidine 229, and aspartate 298. The residue at position 143 (lysine 143) is an N6-carboxylysine. Aspartate 298 is an active-site residue. Residues histidine 302 and 316–317 (AG) contribute to the substrate site.

This sequence belongs to the metallo-dependent hydrolases superfamily. DHOase family. Class I DHOase subfamily. It depends on Zn(2+) as a cofactor.

The enzyme catalyses (S)-dihydroorotate + H2O = N-carbamoyl-L-aspartate + H(+). It functions in the pathway pyrimidine metabolism; UMP biosynthesis via de novo pathway; (S)-dihydroorotate from bicarbonate: step 3/3. In terms of biological role, catalyzes the reversible cyclization of carbamoyl aspartate to dihydroorotate. In Methanosphaera stadtmanae (strain ATCC 43021 / DSM 3091 / JCM 11832 / MCB-3), this protein is Dihydroorotase.